The chain runs to 446 residues: Exodeoxyribonuclease 7 large subunit (446 aa).

Belongs to the XseA family. Heterooligomer composed of large and small subunits.

The protein resides in the cytoplasm. It carries out the reaction Exonucleolytic cleavage in either 5'- to 3'- or 3'- to 5'-direction to yield nucleoside 5'-phosphates.. In terms of biological role, bidirectionally degrades single-stranded DNA into large acid-insoluble oligonucleotides, which are then degraded further into small acid-soluble oligonucleotides. In Streptococcus pyogenes serotype M6 (strain ATCC BAA-946 / MGAS10394), this protein is Exodeoxyribonuclease 7 large subunit.